Here is an 890-residue protein sequence, read N- to C-terminus: Translation initiation factor IF-2 (890 aa).

A disordered region spans residues 45 to 304 (LIDHLNQKNS…LQQGFQKPAQ (260 aa)). A compositionally biased stretch (polar residues) spans 67–81 (STLNIPGTGGKSKSV). The span at 92–217 (VKRDPQEAER…RMAEENKWTD (126 aa)) shows a compositional bias: basic and acidic residues. Over residues 252–266 (GRGRNAKAARPKKGN) the composition is skewed to basic residues. A compositionally biased stretch (basic and acidic residues) spans 267–280 (KHAESKADREEARA). The tr-type G domain occupies 389 to 558 (PRAPVVTIMG…LLQAEVLELK (170 aa)). The tract at residues 398-405 (GHVDHGKT) is G1. 398–405 (GHVDHGKT) provides a ligand contact to GTP. Residues 423-427 (GITQH) form a G2 region. A G3 region spans residues 444 to 447 (DTPG). Residues 444-448 (DTPGH) and 498-501 (NKID) each bind GTP. The interval 498-501 (NKID) is G4. The interval 534 to 536 (SAK) is G5. The residue at position 808 (Lys808) is an N6-acetyllysine.

Belongs to the TRAFAC class translation factor GTPase superfamily. Classic translation factor GTPase family. IF-2 subfamily.

Its subcellular location is the cytoplasm. One of the essential components for the initiation of protein synthesis. Protects formylmethionyl-tRNA from spontaneous hydrolysis and promotes its binding to the 30S ribosomal subunits. Also involved in the hydrolysis of GTP during the formation of the 70S ribosomal complex. This is Translation initiation factor IF-2 from Escherichia coli O127:H6 (strain E2348/69 / EPEC).